The chain runs to 2531 residues: Highly reducing polyketide synthase ausV (2531 aa).

Residues 7-432 form the Ketosynthase family 3 (KS3) domain; sequence STPIAIIGLS…GTNAHCVMET (426 aa). Catalysis depends on for beta-ketoacyl synthase activity residues Cys-180, His-315, and His-355. The tract at residues 554-882 is malonyl-CoA:ACP transacylase (MAT) domain; sequence FVFTGQGAQW…HHTLLESMGS (329 aa). The active-site For malonyltransferase activity is the Ser-644. Residues 939–1069 form an N-terminal hotdog fold region; it reads HDLCGIRVED…GSVLAGTPSD (131 aa). In terms of domain architecture, PKS/mFAS DH spans 939-1238; it reads HDLCGIRVED…LATLSVRSGD (300 aa). A dehydratase (DH) domain region spans residues 940–1236; that stretch reads DLCGIRVEDD…LELATLSVRS (297 aa). Catalysis depends on His-971, which acts as the Proton acceptor; for dehydratase activity. Positions 1087–1238 are C-terminal hotdog fold; it reads YVETTPRQAY…LATLSVRSGD (152 aa). The Proton donor; for dehydratase activity role is filled by Asp-1152. The segment at 1414-1592 is methyltransferase (CMet) domain; it reads SSYLRLHARN…DTGFSGVDIS (179 aa). The tract at residues 1832–2133 is enoyl reductase (ER) domain; the sequence is LRFVQDPAYW…SGGAKPGCSR (302 aa). Residues 2156-2331 are ketoreductase (KR) domain; that stretch reads HGRALVPDFH…AGVSLSLGFI (176 aa). In terms of domain architecture, Carrier spans 2444 to 2521; the sequence is AAATAVLDAL…ELARDLALRS (78 aa). Ser-2481 carries the post-translational modification O-(pantetheine 4'-phosphoryl)serine.

It functions in the pathway secondary metabolite biosynthesis; terpenoid biosynthesis. Highly reducing polyketide synthase; part of the gene cluster that mediates the biosynthesis of calidodehydroaustin, a fungal meroterpenoid. The first step of the pathway is the synthesis of 3,5-dimethylorsellinic acid by the polyketide synthase ausA. 3,5-dimethylorsellinic acid is then prenylated by the polyprenyl transferase ausN. Further epoxidation by the FAD-dependent monooxygenase ausM and cyclization by the probable terpene cyclase ausL lead to the formation of protoaustinoid A. Protoaustinoid A is then oxidized to spiro-lactone preaustinoid A3 by the combined action of the FAD-binding monooxygenases ausB and ausC, and the dioxygenase ausE. Acid-catalyzed keto-rearrangement and ring contraction of the tetraketide portion of preaustinoid A3 by ausJ lead to the formation of preaustinoid A4. The aldo-keto reductase ausK, with the help of ausH, is involved in the next step by transforming preaustinoid A4 into isoaustinone which is in turn hydroxylated by the P450 monooxygenase ausI to form austinolide. The cytochrome P450 monooxygenase ausG modifies austinolide to austinol. Austinol is further acetylated to austin by the O-acetyltransferase ausP, which spontaneously changes to dehydroaustin. The cytochrome P450 monooxygenase ausR then converts dehydroaustin is into 7-dehydrodehydroaustin. The hydroxylation catalyzed by ausR permits the O-acetyltransferase ausQ to add an additional acetyl group to the molecule, leading to the formation of acetoxydehydroaustin. The short chain dehydrogenase ausT catalyzes the reduction of the double bond present between carbon atoms 1 and 2 to convert 7-dehydrodehydroaustin into 1,2-dihydro-7-hydroxydehydroaustin. AusQ catalyzes not only an acetylation reaction but also the addition of the PKS ausV diketide product to 1,2-dihydro-7-hydroxydehydroaustin, forming precalidodehydroaustin. Finally, the iron/alpha-ketoglutarate-dependent dioxygenase converts precalidodehydroaustin into calidodehydroaustin. The chain is Highly reducing polyketide synthase ausV from Aspergillus calidoustus.